Here is a 269-residue protein sequence, read N- to C-terminus: Formamidopyrimidine-DNA glycosylase (269 aa).

The active-site Schiff-base intermediate with DNA is the P2. Residue E3 is the Proton donor of the active site. K57 (proton donor; for beta-elimination activity) is an active-site residue. H90, R109, and K150 together coordinate DNA. The FPG-type zinc finger occupies Q235–H269. The active-site Proton donor; for delta-elimination activity is R259.

This sequence belongs to the FPG family. As to quaternary structure, monomer. Requires Zn(2+) as cofactor.

The enzyme catalyses Hydrolysis of DNA containing ring-opened 7-methylguanine residues, releasing 2,6-diamino-4-hydroxy-5-(N-methyl)formamidopyrimidine.. It catalyses the reaction 2'-deoxyribonucleotide-(2'-deoxyribose 5'-phosphate)-2'-deoxyribonucleotide-DNA = a 3'-end 2'-deoxyribonucleotide-(2,3-dehydro-2,3-deoxyribose 5'-phosphate)-DNA + a 5'-end 5'-phospho-2'-deoxyribonucleoside-DNA + H(+). Its function is as follows. Involved in base excision repair of DNA damaged by oxidation or by mutagenic agents. Acts as a DNA glycosylase that recognizes and removes damaged bases. Has a preference for oxidized purines, such as 7,8-dihydro-8-oxoguanine (8-oxoG). Has AP (apurinic/apyrimidinic) lyase activity and introduces nicks in the DNA strand. Cleaves the DNA backbone by beta-delta elimination to generate a single-strand break at the site of the removed base with both 3'- and 5'-phosphates. The protein is Formamidopyrimidine-DNA glycosylase of Yersinia pseudotuberculosis serotype O:1b (strain IP 31758).